Reading from the N-terminus, the 568-residue chain is Urease subunit alpha (568 aa).

A Urease domain is found at 130–568 (GGIDTHIHFI…LPMAQRYFLF (439 aa)). The Ni(2+) site is built by His135, His137, and Lys218. The residue at position 218 (Lys218) is an N6-carboxylysine. His220 serves as a coordination point for substrate. Residues His247 and His273 each coordinate Ni(2+). The active-site Proton donor is His321. Asp361 is a binding site for Ni(2+).

It belongs to the metallo-dependent hydrolases superfamily. Urease alpha subunit family. Heterotrimer of UreA (gamma), UreB (beta) and UreC (alpha) subunits. Three heterotrimers associate to form the active enzyme. Ni cation serves as cofactor. In terms of processing, carboxylation allows a single lysine to coordinate two nickel ions.

It localises to the cytoplasm. It carries out the reaction urea + 2 H2O + H(+) = hydrogencarbonate + 2 NH4(+). It functions in the pathway nitrogen metabolism; urea degradation; CO(2) and NH(3) from urea (urease route): step 1/1. This Burkholderia multivorans (strain ATCC 17616 / 249) protein is Urease subunit alpha.